We begin with the raw amino-acid sequence, 278 residues long: Tryptophan synthase alpha chain (278 aa).

Catalysis depends on proton acceptor residues glutamate 50 and aspartate 61.

This sequence belongs to the TrpA family. Tetramer of two alpha and two beta chains.

The catalysed reaction is (1S,2R)-1-C-(indol-3-yl)glycerol 3-phosphate + L-serine = D-glyceraldehyde 3-phosphate + L-tryptophan + H2O. Its pathway is amino-acid biosynthesis; L-tryptophan biosynthesis; L-tryptophan from chorismate: step 5/5. The alpha subunit is responsible for the aldol cleavage of indoleglycerol phosphate to indole and glyceraldehyde 3-phosphate. The protein is Tryptophan synthase alpha chain of Nitrobacter winogradskyi (strain ATCC 25391 / DSM 10237 / CIP 104748 / NCIMB 11846 / Nb-255).